A 754-amino-acid chain; its full sequence is MLWNTQYFRIEGMISLGWPRLAKTSILKFVPIAQNHRIRKMKVQDDFILTIDDSEDDIHYDDYDADAVDEEMPSNVELKKKSKKATPAKDSDFNGEFLFEADVNKDLSSATDMNWDFDMGSKTESNRASNTVDLDAIISRNRKPDDDEFPSSFPSEEELQEPEQENIDSDDEDLAIDGFGAGAIAENEDESSQDESESEEEDDITEPVPSFANISTQDFNSDSAAGSSDSEEDEEEIAKKNAFFAEGDKEKSMMTTTHSSFQSMNLSRPILKGLSNLGFEVPTQIQDKTIPLALLGKDIVGAAVTGSGKTAAFIVPILERLLYRPKKVPTTRVLILCPTRELAMQCHSVATKIASFTDIMVCLCIGGLSLKLQEQELRKRPDIVIATPGRFIDHMRNSQGFTVENIEIMVMDEADRMLEDGFADELNEIIQACPKSRQTMLFSATMTDKVDDLIRLSLNRPVRVFVDNKKTTAKLLTQEFVRVRPQRELLRPAMLIYLCKELFHRRTIIFFRSKAFAHKMRVIFGLLSLNATEIHGSLSQEQRVRALEDFRDGKCNYLLATDVASRGIDIKGIEVVINYEAPATHEVYLHRVGRTARAGRSGRAITLAGEGDRKVLKGVFKNSSAQNTKLVNRNLDFNKVEKFGKEIEELEPVVQKVLDEEKQERELKIAERDLKKGENIMKYGDEIRSRPARTWFQSEKDKQASKASEAKDKKSLAKRKKQMEKEEVPRAYKKTKNDRLSNKKSTKKSKSKRK.

The segment at 121–237 (SKTESNRASN…SDSEEDEEEI (117 aa)) is disordered. Acidic residues-rich tracts occupy residues 155–175 (SEEE…EDLA) and 186–205 (ENED…DDIT). A Q motif motif is present at residues 259–287 (SSFQSMNLSRPILKGLSNLGFEVPTQIQD). In terms of domain architecture, Helicase ATP-binding spans 290–464 (IPLALLGKDI…RLSLNRPVRV (175 aa)). 303–310 (AVTGSGKT) provides a ligand contact to ATP. The DEAD box motif lies at 412–415 (DEAD). The Helicase C-terminal domain occupies 475-641 (LLTQEFVRVR…NRNLDFNKVE (167 aa)). A coiled-coil region spans residues 655–728 (QKVLDEEKQE…RKKQMEKEEV (74 aa)). A disordered region spans residues 692-754 (ARTWFQSEKD…STKKSKSKRK (63 aa)). 2 stretches are compositionally biased toward basic and acidic residues: residues 698 to 715 (SEKD…DKKS) and 723 to 741 (MEKE…DRLS). A compositionally biased stretch (basic residues) spans 742–754 (NKKSTKKSKSKRK).

It belongs to the DEAD box helicase family. DDX27/DRS1 subfamily. Associates with pre-ribosomal particles.

It localises to the nucleus. It is found in the nucleolus. The enzyme catalyses ATP + H2O = ADP + phosphate + H(+). Functionally, ATP-binding RNA helicase involved in ribosome assembly. This Schizosaccharomyces pombe (strain 972 / ATCC 24843) (Fission yeast) protein is ATP-dependent RNA helicase drs1 (drs1).